Reading from the N-terminus, the 82-residue chain is Myrmicitoxin(1)-Pm3a (82 aa).

A signal peptide spans 1 to 23 (MEIPKLLYIAVIAIGLSGSLTCA). A propeptide spanning residues 24 to 59 (TPLANPLADPEAEAEAKATAEATAEAIAEALAEPEP) is cleaved from the precursor. Position 81 is a leucine amide (Leu81).

This sequence belongs to the formicidae venom clade 1 family. Expressed by the venom gland.

It localises to the secreted. Functionally, toxin that causes a slowly developing temporary paralysis when intrathoracically injected into insects (blowflies). Does not cause spontaneous nocifensive behaviors by intraplantar injection in mice. The sequence is that of Myrmicitoxin(1)-Pm3a from Pogonomyrmex maricopa (Maricopa harvester ant).